The primary structure comprises 506 residues: Histidine--tRNA ligase, mitochondrial (506 aa).

The transit peptide at 1–33 (MHLLGLLPRRAWASLLSQLLRPPWASCTGAVRC) directs the protein to the mitochondrion. A Phosphoserine modification is found at Ser-67. Residues 131 to 133 (DLT), Arg-158, Gln-174, Asp-178, Arg-327, and 331 to 332 (YY) contribute to the L-histidine site. Lys-444 carries the post-translational modification N6-acetyllysine.

This sequence belongs to the class-II aminoacyl-tRNA synthetase family. As to quaternary structure, homodimer.

It localises to the mitochondrion. The enzyme catalyses tRNA(His) + L-histidine + ATP = L-histidyl-tRNA(His) + AMP + diphosphate + H(+). In terms of biological role, mitochondrial aminoacyl-tRNA synthetase that catalyzes the ATP-dependent ligation of histidine to the 3'-end of its cognate tRNA, via the formation of an aminoacyl-adenylate intermediate (His-AMP). In Pongo abelii (Sumatran orangutan), this protein is Histidine--tRNA ligase, mitochondrial (HARS2).